The following is a 341-amino-acid chain: Holliday junction branch migration complex subunit RuvB (341 aa).

The interval 1-21 (MSQPDPMLRPEPLESDGEDRA) is disordered. Positions 4-183 (PDPMLRPEPL…FGIPTRLQFY (180 aa)) are large ATPase domain (RuvB-L). Residues Leu-22, Arg-23, Gly-64, Lys-67, Thr-68, Thr-69, 130–132 (EDF), Arg-173, Tyr-183, and Arg-220 contribute to the ATP site. A Mg(2+)-binding site is contributed by Thr-68. A small ATPAse domain (RuvB-S) region spans residues 184–254 (TIEELDLIVT…IADSALTRLG (71 aa)). Residues 257–341 (HLGLDTADRR…PRTQESLFDE (85 aa)) form a head domain (RuvB-H) region. DNA is bound by residues Arg-293, Arg-312, and Arg-317.

Belongs to the RuvB family. Homohexamer. Forms an RuvA(8)-RuvB(12)-Holliday junction (HJ) complex. HJ DNA is sandwiched between 2 RuvA tetramers; dsDNA enters through RuvA and exits via RuvB. An RuvB hexamer assembles on each DNA strand where it exits the tetramer. Each RuvB hexamer is contacted by two RuvA subunits (via domain III) on 2 adjacent RuvB subunits; this complex drives branch migration. In the full resolvosome a probable DNA-RuvA(4)-RuvB(12)-RuvC(2) complex forms which resolves the HJ.

The protein localises to the cytoplasm. The catalysed reaction is ATP + H2O = ADP + phosphate + H(+). Its function is as follows. The RuvA-RuvB-RuvC complex processes Holliday junction (HJ) DNA during genetic recombination and DNA repair, while the RuvA-RuvB complex plays an important role in the rescue of blocked DNA replication forks via replication fork reversal (RFR). RuvA specifically binds to HJ cruciform DNA, conferring on it an open structure. The RuvB hexamer acts as an ATP-dependent pump, pulling dsDNA into and through the RuvAB complex. RuvB forms 2 homohexamers on either side of HJ DNA bound by 1 or 2 RuvA tetramers; 4 subunits per hexamer contact DNA at a time. Coordinated motions by a converter formed by DNA-disengaged RuvB subunits stimulates ATP hydrolysis and nucleotide exchange. Immobilization of the converter enables RuvB to convert the ATP-contained energy into a lever motion, pulling 2 nucleotides of DNA out of the RuvA tetramer per ATP hydrolyzed, thus driving DNA branch migration. The RuvB motors rotate together with the DNA substrate, which together with the progressing nucleotide cycle form the mechanistic basis for DNA recombination by continuous HJ branch migration. Branch migration allows RuvC to scan DNA until it finds its consensus sequence, where it cleaves and resolves cruciform DNA. This Paracoccus denitrificans (strain Pd 1222) protein is Holliday junction branch migration complex subunit RuvB.